A 188-amino-acid polypeptide reads, in one-letter code: dCTP deaminase (188 aa).

109 to 114 contacts dCTP; that stretch reads KSTYAR. Residue glutamate 135 is the Proton donor/acceptor of the active site. 3 residues coordinate dCTP: glutamine 154, tyrosine 168, and glutamine 178.

The protein belongs to the dCTP deaminase family. Homotrimer.

It catalyses the reaction dCTP + H2O + H(+) = dUTP + NH4(+). It participates in pyrimidine metabolism; dUMP biosynthesis; dUMP from dCTP (dUTP route): step 1/2. Catalyzes the deamination of dCTP to dUTP. This chain is dCTP deaminase, found in Helicobacter pylori (strain J99 / ATCC 700824) (Campylobacter pylori J99).